Reading from the N-terminus, the 450-residue chain is tRNA-2-methylthio-N(6)-dimethylallyladenosine synthase (450 aa).

The region spanning 2–119 is the MTTase N-terminal domain; it reads KKVFVKTYGC…LPDLIARRQR (118 aa). Residues C11, C48, C82, C156, C160, and C163 each contribute to the [4Fe-4S] cluster site. Positions 142 to 375 constitute a Radical SAM core domain; it reads RVEGPSAFVS…QATIEENVQR (234 aa). The 71-residue stretch at 378–448 folds into the TRAM domain; that stretch reads QNMVGTVQRI…PHSLRGEIVV (71 aa).

The protein belongs to the methylthiotransferase family. MiaB subfamily. As to quaternary structure, monomer. Requires [4Fe-4S] cluster as cofactor.

The protein localises to the cytoplasm. It catalyses the reaction N(6)-dimethylallyladenosine(37) in tRNA + (sulfur carrier)-SH + AH2 + 2 S-adenosyl-L-methionine = 2-methylsulfanyl-N(6)-dimethylallyladenosine(37) in tRNA + (sulfur carrier)-H + 5'-deoxyadenosine + L-methionine + A + S-adenosyl-L-homocysteine + 2 H(+). In terms of biological role, catalyzes the methylthiolation of N6-(dimethylallyl)adenosine (i(6)A), leading to the formation of 2-methylthio-N6-(dimethylallyl)adenosine (ms(2)i(6)A) at position 37 in tRNAs that read codons beginning with uridine. This is tRNA-2-methylthio-N(6)-dimethylallyladenosine synthase from Cupriavidus necator (strain ATCC 17699 / DSM 428 / KCTC 22496 / NCIMB 10442 / H16 / Stanier 337) (Ralstonia eutropha).